The primary structure comprises 458 residues: N-acetylgalactosamine kinase (458 aa).

Residues Arg-43, Glu-49, His-50, and Asp-52 each coordinate alpha-D-galactose. 3 residues coordinate ATP: Gly-143, Ser-145, and Ser-146. Asp-190 provides a ligand contact to alpha-D-galactose. The Proton acceptor role is filled by Asp-190. Residues Asn-233 and Lys-234 each contribute to the ATP site.

It belongs to the GHMP kinase family. GalK subfamily. Monomer.

It catalyses the reaction N-acetyl-alpha-D-galactosamine + ATP = N-acetyl-alpha-D-galactosamine 1-phosphate + ADP + H(+). Its function is as follows. Acts on GalNAc. Also acts as a galactokinase when galactose is present at high concentrations. The protein is N-acetylgalactosamine kinase (GALK2) of Pongo abelii (Sumatran orangutan).